A 77-amino-acid chain; its full sequence is NAD(P)H-quinone oxidoreductase subunit L (77 aa).

Helical transmembrane passes span 12 to 32 (LIAYIGIIFTYLLVIPLLLFY) and 47 to 67 (LGIYGLVFLFFPGLILFSPFL).

This sequence belongs to the complex I NdhL subunit family. As to quaternary structure, NDH-1 can be composed of about 15 different subunits; different subcomplexes with different compositions have been identified which probably have different functions.

The protein localises to the cellular thylakoid membrane. It catalyses the reaction a plastoquinone + NADH + (n+1) H(+)(in) = a plastoquinol + NAD(+) + n H(+)(out). It carries out the reaction a plastoquinone + NADPH + (n+1) H(+)(in) = a plastoquinol + NADP(+) + n H(+)(out). In terms of biological role, NDH-1 shuttles electrons from an unknown electron donor, via FMN and iron-sulfur (Fe-S) centers, to quinones in the respiratory and/or the photosynthetic chain. The immediate electron acceptor for the enzyme in this species is believed to be plastoquinone. Couples the redox reaction to proton translocation, and thus conserves the redox energy in a proton gradient. Cyanobacterial NDH-1 also plays a role in inorganic carbon-concentration. In Prochlorococcus marinus (strain AS9601), this protein is NAD(P)H-quinone oxidoreductase subunit L.